We begin with the raw amino-acid sequence, 2407 residues long: Daf-12-interacting protein 1 (2407 aa).

A compositionally biased stretch (low complexity) spans 90–112; the sequence is QNSSMASMSSTPSSGQSSSPRNA. Residues 90-152 form a disordered region; sequence QNSSMASMSS…PHLSVQSQQR (63 aa). The 59-residue stretch at 277 to 335 folds into the RRM domain; sequence CSVHVPHLDRHSPDHYRRRFESYGQVIDVDMVKSNDNKAFAVVQFTNIDDAQKALQDTN. 11 disordered regions span residues 439-632, 737-767, 785-849, 874-896, 921-986, 993-1012, 1025-1844, 1858-1918, 1932-1976, 2077-2103, and 2172-2200; these read EVAA…LELD, ATDSKELGRDQPAGGRTSGRPSLDESRTNRL, LCIG…GRPA, PTHDEMMAPRGTPPSRRSSETMV, LIAA…PSNA, RSQSMTSGDPKKSAPSTPVV, SNQP…EDSE, IAQE…VNNH, LQPA…QQSD, EENERKVEEDRREKQRKEEERQRLAAA, and SIQRPSSTASTSSNPPKAPLQPSASVNQN. Residues 443–456 show a composition bias toward polar residues; that stretch reads RSSSPTSKSENDQG. A compositionally biased stretch (acidic residues) spans 512–529; that stretch reads EDSDEQNDVDEEDDEDVV. Basic and acidic residues-rich tracts occupy residues 530–541, 548–564, and 573–586; these read SEEKRHEPEEGK, GHRDESNGDKDHEDSSE, and SHHETSHSPEKDSE. The span at 587-603 shows a compositional bias: polar residues; that stretch reads AYQSRSFSPLNYQSQSP. The segment covering 618–627 has biased composition (low complexity); it reads SPTTSSASSS. Composition is skewed to polar residues over residues 791–826 and 837–849; these read TPSTPFPTSQPLLVNTTHLPGTSQPSTSGGITTPRS and SRHNSMSSTGRPA. Residues 924 to 946 show a composition bias toward polar residues; that stretch reads ATSTGTHSVSSSAHSTPRHSISG. The segment covering 966 to 978 has biased composition (basic and acidic residues); the sequence is SRPEKVQIRHDTI. The span at 1043–1052 shows a compositional bias: polar residues; the sequence is SALQNIQNHQ. Residues 1053-1070 are compositionally biased toward low complexity; that stretch reads PPHSNANSTPSTPSTSTH. Over residues 1086-1153 the composition is skewed to basic and acidic residues; sequence KEKEEREREA…KVRKKAEKEK (68 aa). Over residues 1165–1177 the composition is skewed to acidic residues; that stretch reads SDESDSDSNDELD. 6 stretches are compositionally biased toward basic and acidic residues: residues 1178-1195, 1218-1227, 1279-1293, 1304-1320, 1335-1355, and 1376-1398; these read LDVRKSTKEMTQEEKDHQ, RAHDSFEKMQ, ADQRLKVLKEREKGE, NDAGEIHQQRLTEDREN, QGERKNVPKRMRRDDSEDAAA, and RRSSEDESKKNAKRDFRDIPHED. 2 stretches are compositionally biased toward low complexity: residues 1456 to 1471 and 1488 to 1498; these read PKHLSPKTSTSSTKRS and TTSSTSTATTS. Residues 1534-1547 are compositionally biased toward polar residues; sequence SMNSAADSPMSTTG. Low complexity predominate over residues 1570–1595; sequence SSSGQHDSSSGSSSDSSSSDGSTSSD. 2 stretches are compositionally biased toward basic and acidic residues: residues 1679–1691 and 1703–1726; these read SEEHEDSHEHGDS and EHQEEKEELENKILDVAAEHHEEQ. Residues 1749-1770 are compositionally biased toward polar residues; that stretch reads TQAQEKSAHTLISDQETDQAVQ. Over residues 1792 to 1805 the composition is skewed to basic and acidic residues; it reads NEKEVSGKDPHNIK. Positions 1809–1826 are enriched in polar residues; sequence PLNNGHTDLLFSPSSSAH. Composition is skewed to basic and acidic residues over residues 1827–1836 and 1873–1892; these read ASEKQSTKSE and EEVKLETSPVPKEEPIKMEE. Composition is skewed to polar residues over residues 1895 to 1911 and 1932 to 1942; these read EQTPTPDLISNNESQDT and LQPASQHQVAQ. Residues 1962 to 1975 show a composition bias toward low complexity; sequence SQQSQPSPMSSQQS. The stretch at 2049 to 2110 forms a coiled coil; the sequence is NQMMQAKMKQ…AAATAAATMA (62 aa). The segment covering 2077-2099 has biased composition (basic and acidic residues); sequence EENERKVEEDRREKQRKEEERQR. Low complexity predominate over residues 2176–2186; it reads PSSTASTSSNP. The 171-residue stretch at 2213 to 2383 folds into the SPOC domain; the sequence is QRWFYKHFPM…TRYLLIVFTN (171 aa).

In terms of assembly, isoform d interacts with daf-12. Isoform d is widely expressed: detected in the hypodermis, seam cells, intestine, somatic gonad, neurons, vulval precursors, body wall muscle and pharynx.

Its subcellular location is the nucleus. In terms of biological role, probable transcriptional corepressor which modulates activity of the nuclear hormone receptor daf-12 to regulate the dauer diapause. The chain is Daf-12-interacting protein 1 from Caenorhabditis elegans.